The sequence spans 363 residues: MNASQQIHVFSSHWKVESVIISLIFSMIFLVGTVGNCLVLAVLIRNGQMNTKSTNLFILNLGLADLCFIVFCVPLQATIYTMDEWVFGAFVCKAVHFIIYLTMYASIFTLAAVSLDRYLAIRYPLRSRETRTPRNALTSISLVWALSLFFSSPYLSYYQQMDLDGTTVCIPAWSVHHRQAMDICTFIFGYLIPVLILGITYARTIRYLWTSVDPMQDMSESRKAKRKVTKMIIIVAVLFCLCWLPHHLVILCMWFGHFPLNHTTYVLRILSHLVAYANSCLNPIVYALVSKHFRKGFKKVFGCAFRNRVVNRIHTVQPAQTVSLMEAASSEGSNHCDGSTRGRLWSKSSKKMMTSAFMTFNVT.

The Extracellular portion of the chain corresponds to 1-23; sequence MNASQQIHVFSSHWKVESVIISL. Residues 24–44 traverse the membrane as a helical segment; that stretch reads IFSMIFLVGTVGNCLVLAVLI. Over 45–54 the chain is Cytoplasmic; it reads RNGQMNTKST. A helical transmembrane segment spans residues 55-75; the sequence is NLFILNLGLADLCFIVFCVPL. Residues 76 to 94 lie on the Extracellular side of the membrane; it reads QATIYTMDEWVFGAFVCKA. A disulfide bond links Cys-92 and Cys-169. The helical transmembrane segment at 95–115 threads the bilayer; it reads VHFIIYLTMYASIFTLAAVSL. The Cytoplasmic portion of the chain corresponds to 116–135; sequence DRYLAIRYPLRSRETRTPRN. A helical transmembrane segment spans residues 136–156; that stretch reads ALTSISLVWALSLFFSSPYLS. Residues 157 to 179 are Extracellular-facing; it reads YYQQMDLDGTTVCIPAWSVHHRQ. The chain crosses the membrane as a helical span at residues 180 to 200; that stretch reads AMDICTFIFGYLIPVLILGIT. Topologically, residues 201-230 are cytoplasmic; the sequence is YARTIRYLWTSVDPMQDMSESRKAKRKVTK. Residues 231-251 traverse the membrane as a helical segment; that stretch reads MIIIVAVLFCLCWLPHHLVIL. At 252–268 the chain is on the extracellular side; the sequence is CMWFGHFPLNHTTYVLR. A helical membrane pass occupies residues 269–289; the sequence is ILSHLVAYANSCLNPIVYALV. At 290 to 363 the chain is on the cytoplasmic side; sequence SKHFRKGFKK…TSAFMTFNVT (74 aa).

Belongs to the G-protein coupled receptor 1 family. Expressed in neurons in the ventral area of the interpeduncular nucleus (IPN) where expression often overlaps with spx1.

Its subcellular location is the membrane. Receptor for the hormone galanin. Receptor for the hormones spexin-1 and spexin-2. The chain is Galanin receptor 2a from Danio rerio (Zebrafish).